Reading from the N-terminus, the 129-residue chain is Prefoldin subunit 4 (129 aa).

Position 1 is an N-acetylmethionine (M1).

The protein belongs to the prefoldin subunit beta family. In terms of assembly, heterohexamer of two PFD-alpha type and four PFD-beta type subunits.

Binds specifically to cytosolic chaperonin (c-CPN) and transfers target proteins to it. Binds to nascent polypeptide chain and promotes folding in an environment in which there are many competing pathways for nonnative proteins. In Saccharomyces cerevisiae (strain ATCC 204508 / S288c) (Baker's yeast), this protein is Prefoldin subunit 4 (GIM3).